The following is a 201-amino-acid chain: 3-isopropylmalate dehydratase small subunit (201 aa).

This sequence belongs to the LeuD family. LeuD type 1 subfamily. As to quaternary structure, heterodimer of LeuC and LeuD.

It catalyses the reaction (2R,3S)-3-isopropylmalate = (2S)-2-isopropylmalate. The protein operates within amino-acid biosynthesis; L-leucine biosynthesis; L-leucine from 3-methyl-2-oxobutanoate: step 2/4. In terms of biological role, catalyzes the isomerization between 2-isopropylmalate and 3-isopropylmalate, via the formation of 2-isopropylmaleate. This Nitrobacter winogradskyi (strain ATCC 25391 / DSM 10237 / CIP 104748 / NCIMB 11846 / Nb-255) protein is 3-isopropylmalate dehydratase small subunit.